We begin with the raw amino-acid sequence, 312 residues long: MDIIFYHPTFDTQWWIKALRKAIPQARVRAWKSGDNDSADYALVWHPPVEMLAGRDLKAVFALGAGVDSILSKLQAHPEMLNPYVPLFRLEDTGMGEQMQEYAVSQVLHWFRRFDDYRIQQNSSHWQPLPEYYREDFTIGILGAGVLGSKVAQSLQTWRFPLRCWSRTRKSWPGVQSFAGREELSAFLSQCRVLINLLPNTPETVGIINQQLLEKLPDGAYLLNLARGVHVVEDDLLAALDSGKVKGAMLDVFNREPLPPESPLWQHPRVTITPHVAAITRPAEAVEYISRTIAQLEKGERVCGQVDRARGY.

Arginine 227 is an active-site residue. Histidine 275 functions as the Proton donor in the catalytic mechanism.

The protein belongs to the D-isomer specific 2-hydroxyacid dehydrogenase family. GhrA subfamily.

The protein resides in the cytoplasm. The catalysed reaction is glycolate + NADP(+) = glyoxylate + NADPH + H(+). The enzyme catalyses (R)-glycerate + NAD(+) = 3-hydroxypyruvate + NADH + H(+). It catalyses the reaction (R)-glycerate + NADP(+) = 3-hydroxypyruvate + NADPH + H(+). Its function is as follows. Catalyzes the NADPH-dependent reduction of glyoxylate and hydroxypyruvate into glycolate and glycerate, respectively. This chain is Glyoxylate/hydroxypyruvate reductase A, found in Shigella dysenteriae serotype 1 (strain Sd197).